The primary structure comprises 179 residues: Large ribosomal subunit protein uL5 (179 aa).

The protein belongs to the universal ribosomal protein uL5 family. Part of the 50S ribosomal subunit; part of the 5S rRNA/L5/L18/L25 subcomplex. Contacts the 5S rRNA and the P site tRNA. Forms a bridge to the 30S subunit in the 70S ribosome.

This is one of the proteins that bind and probably mediate the attachment of the 5S RNA into the large ribosomal subunit, where it forms part of the central protuberance. In the 70S ribosome it contacts protein S13 of the 30S subunit (bridge B1b), connecting the 2 subunits; this bridge is implicated in subunit movement. Contacts the P site tRNA; the 5S rRNA and some of its associated proteins might help stabilize positioning of ribosome-bound tRNAs. The polypeptide is Large ribosomal subunit protein uL5 (Listeria innocua serovar 6a (strain ATCC BAA-680 / CLIP 11262)).